We begin with the raw amino-acid sequence, 231 residues long: Probable tetraspanin tspE (231 aa).

Residues 1-21 (MTFVDNFEFNQNTPRLVRGPF) lie on the Cytoplasmic side of the membrane. The helical transmembrane segment at 22–42 (IILNSIIFSLSFILLCSTGII) threads the bilayer. At 43-58 (IYYLNEYYLVKDLTIP) the chain is on the extracellular side. Residues 59–79 (LGSFILSAYMVITTIVGGIAI) traverse the membrane as a helical segment. The Cytoplasmic portion of the chain corresponds to 80–83 (WKKK). The helical transmembrane segment at 84–104 (LGLHLTFMVFLVVLIVCLVGV) threads the bilayer. The Extracellular segment spans residues 105–195 (SAKMIVDSGN…VESILKYLGY (91 aa)). A helical membrane pass occupies residues 196 to 216 (YGIVLSVIELILLILSGFFLL). At 217–231 (KTNKNVKSKSFILQD) the chain is on the cytoplasmic side.

It belongs to the tetraspanin (TM4SF) family.

Its subcellular location is the membrane. The chain is Probable tetraspanin tspE (tspE) from Dictyostelium discoideum (Social amoeba).